We begin with the raw amino-acid sequence, 749 residues long: Chaperone protein dnaK3 (749 aa).

The residue at position 198 (T198) is a Phosphothreonine; by autocatalysis. 3 stretches are compositionally biased toward basic and acidic residues: residues 643-653 (RWDADPWDRSR), 661-694 (YDDRRSPVSDPYRGERWVEEQTSMSRREPVRDRN), and 711-724 (PTWEEDQPPRRDRS). The interval 643-749 (RWDADPWDRS…GWDDDDDEWF (107 aa)) is disordered. Residues 740-749 (GWDDDDDEWF) show a composition bias toward acidic residues.

It belongs to the heat shock protein 70 family.

Functionally, acts as a chaperone. The sequence is that of Chaperone protein dnaK3 (dnaK3) from Synechococcus elongatus (strain ATCC 33912 / PCC 7942 / FACHB-805) (Anacystis nidulans R2).